The sequence spans 215 residues: Large ribosomal subunit protein bL25 (215 aa).

Composition is skewed to polar residues over residues 1–19 (MAKS…NTGK) and 206–215 (ENKTAATESE). Disordered stretches follow at residues 1–29 (MAKS…RRDG) and 190–215 (AKYA…TESE).

It belongs to the bacterial ribosomal protein bL25 family. CTC subfamily. Part of the 50S ribosomal subunit; part of the 5S rRNA/L5/L18/L25 subcomplex. Contacts the 5S rRNA. Binds to the 5S rRNA independently of L5 and L18.

This is one of the proteins that binds to the 5S RNA in the ribosome where it forms part of the central protuberance. This Mycobacterium leprae (strain TN) protein is Large ribosomal subunit protein bL25.